We begin with the raw amino-acid sequence, 883 residues long: Glutamate receptor 2 (883 aa).

The signal sequence occupies residues 1–21; sequence MQKIMHISVLLSPVLWGLIFG. Residues 22 to 543 are Extracellular-facing; the sequence is VSSNSIQIGG…GVFSFLDPLA (522 aa). A disulfide bond links Cys78 and Cys330. Asn256, Asn370, Asn406, and Asn413 each carry an N-linked (GlcNAc...) asparagine glycan. Positions 499, 501, and 506 each coordinate L-glutamate. Residues 544–564 form a helical membrane-spanning segment; that stretch reads YEIWMCIVFAYIGVSVVLFLV. Topologically, residues 565-591 are cytoplasmic; the sequence is SRFSPYEWHTEEFEDGRETQSSESTNE. Residues 592–607 constitute an intramembrane region (helical; Pore-forming); it reads FGIFNSLWFSLGAFMQ. The stretch at 608–610 is an intramembrane region; that stretch reads QGC. A lipid anchor (S-palmitoyl cysteine) is attached at Cys610. Residues 611–616 are Cytoplasmic-facing; it reads DISPRS. Residues 617–637 traverse the membrane as a helical segment; that stretch reads LSGRIVGGVWWFFTLIIISSY. Topologically, residues 638–812 are extracellular; it reads TANLAAFLTV…EKTSALSLSN (175 aa). Positions 675 and 676 each coordinate L-glutamate. Phosphoserine; by PKC is present on Ser683. The residue at position 717 (Ser717) is a Phosphoserine; by PKG. Residue Glu726 participates in L-glutamate binding. Cys739 and Cys794 are joined by a disulfide. The helical transmembrane segment at 813–833 threads the bilayer; sequence VAGVFYILVGGLGLAMLVALI. Residues 834–883 are Cytoplasmic-facing; the sequence is EFCYKSRAEAKRMKVAKNPQNINPSSSQNSQNFATYKEGYNVYGIESVKI. Cys836 carries S-palmitoyl cysteine lipidation. 2 positions are modified to phosphoserine: Ser860 and Ser863. A required for interaction with IQSEC1 region spans residues 867 to 877; the sequence is ATYKEGYNVYG. Tyr876 bears the Phosphotyrosine mark. Ser880 is subject to Phosphoserine.

The protein belongs to the glutamate-gated ion channel (TC 1.A.10.1) family. GRIA2 subfamily. In terms of assembly, homotetramer or heterotetramer of pore-forming glutamate receptor subunits. Tetramers may be formed by the dimerization of dimers. May interact with MPP4. Forms a ternary complex with GRIP1 and CSPG4. Interacts with ATAD1 in an ATP-dependent manner. ATAD1-catalyzed ATP hydrolysis disrupts binding to ATAD1 and to GRIP1 and leads to AMPAR complex disassembly. Interacts with GRIP2. Interacts with GRIP1. Interacts with NSF via its C-terminus. Interacts with CACNG2, PICK1 and GRIP2. Interacts with GRIA1 and SYNDIG1. Part of a complex containing GRIA2, NSF and NAPA and/or NAPB. Interacts with SNX27 (via PDZ domain); the interaction is required for recycling to the plasma membrane when endocytosed and prevent degradation in lysosomes. Interacts with LRFN1. Found in a complex with GRIA1, GRIA3, GRIA4, CNIH2, CNIH3, CACNG2, CACNG3, CACNG4, CACNG5, CACNG7 and CACNG8. Interacts with CACNG5. Interacts with OLFM2. Interacts with AP4B1, AP4E1 and AP4M1; probably indirect it mediates the somatodendritic localization of GRIA2 in neurons. Forms a complex with GRIP1, NSG1 and STX12; controls the intracellular fate of AMPAR and the endosomal sorting of the GRIA2 subunit toward recycling and membrane targeting. Interacts with IQSEC1; the interaction is required for ARF6 activation. Interacts (heterotetramer form) with CNIH2 and CNIH3; this interaction promotes expression at the plasma membrane and extensively modulates their gating properties by slowing deactivation and desensitization kinetics. In terms of processing, palmitoylated. Depalmitoylated upon L-glutamate stimulation. Cys-610 palmitoylation leads to Golgi retention and decreased cell surface expression. In contrast, Cys-836 palmitoylation does not affect cell surface expression but regulates stimulation-dependent endocytosis. Phosphorylation at Tyr-876 is required for interaction with IQSEC1 and ARF6 activation, which in turn triggers AMPAR internalization for persistent synaptic depression. Post-translationally, ubiquitinated by RNF167, leading to its degradation. In terms of processing, N-glycosylated. In terms of tissue distribution, detected in forebrain. Detected in dendrites of neuronal cells. Expressed in the pyramidal cell layers of CA1 and CA3 and in the granule cell layer of the dentate gyrus.

It localises to the cell membrane. The protein localises to the postsynaptic cell membrane. It is found in the postsynaptic density membrane. It carries out the reaction Ca(2+)(in) = Ca(2+)(out). It catalyses the reaction Na(+)(in) = Na(+)(out). In terms of biological role, ionotropic glutamate receptor that functions as a ligand-gated cation channel, gated by L-glutamate and glutamatergic agonists such as alpha-amino-3-hydroxy-5-methyl-4-isoxazolepropionic acid (AMPA), quisqualic acid, and kainic acid. L-glutamate acts as an excitatory neurotransmitter at many synapses in the central nervous system and plays an important role in fast excitatory synaptic transmission. Binding of the excitatory neurotransmitter L-glutamate induces a conformation change, leading to the opening of the cation channel, and thereby converts the chemical signal to an electrical impulse upon entry of monovalent and divalent cations such as sodium and calcium. The receptor then desensitizes rapidly and enters in a transient inactive state, characterized by the presence of bound agonist. In the presence of CACNG4 or CACNG7 or CACNG8, shows resensitization which is characterized by a delayed accumulation of current flux upon continued application of L-glutamate. Through complex formation with NSG1, GRIP1 and STX12 controls the intracellular fate of AMPAR and the endosomal sorting of the GRIA2 subunit toward recycling and membrane targeting. This chain is Glutamate receptor 2, found in Rattus norvegicus (Rat).